Here is an 89-residue protein sequence, read N- to C-terminus: Small ribosomal subunit protein uS19 (89 aa).

This sequence belongs to the universal ribosomal protein uS19 family.

In terms of biological role, protein S19 forms a complex with S13 that binds strongly to the 16S ribosomal RNA. The chain is Small ribosomal subunit protein uS19 from Stenotrophomonas maltophilia (strain K279a).